A 165-amino-acid chain; its full sequence is Aspartate carbamoyltransferase regulatory chain (165 aa).

Zn(2+) contacts are provided by Cys-121, Cys-126, Cys-149, and Cys-152.

Belongs to the PyrI family. As to quaternary structure, contains catalytic and regulatory chains. The cofactor is Zn(2+).

Functionally, involved in allosteric regulation of aspartate carbamoyltransferase. In Methanoregula boonei (strain DSM 21154 / JCM 14090 / 6A8), this protein is Aspartate carbamoyltransferase regulatory chain.